The primary structure comprises 276 residues: tRNA dimethylallyltransferase (276 aa).

The interval 9-12 is interaction with substrate tRNA; that stretch reads DSLS.

Belongs to the IPP transferase family. In terms of assembly, monomer. Mg(2+) is required as a cofactor.

The catalysed reaction is adenosine(37) in tRNA + dimethylallyl diphosphate = N(6)-dimethylallyladenosine(37) in tRNA + diphosphate. Functionally, catalyzes the transfer of a dimethylallyl group onto the adenine at position 37 in tRNAs that read codons beginning with uridine, leading to the formation of N6-(dimethylallyl)adenosine (i(6)A). This chain is tRNA dimethylallyltransferase (miaA), found in Helicobacter pylori (strain HPAG1).